Consider the following 536-residue polypeptide: Allene oxide synthase, chloroplastic (536 aa).

Residues 1–58 constitute a chloroplast transit peptide; that stretch reads MASSALNNLVAVNPNTLSPSPKSTPLPNTFSNLRRVSAFRPIKASLFGDSPIKIPGIT. Heme b contacts are provided by K151, H182, and K186. (13S)-hydroperoxy-(9Z,11E)-octadecadienoate is bound by residues S262, N339, and K345. N339 contributes to the (13S)-hydroperoxy-(9Z,11E,15Z)-octadecatrienoate binding site. The heme b site is built by K487 and C489.

The protein belongs to the cytochrome P450 family. Heme b is required as a cofactor.

The protein localises to the plastid. It is found in the chloroplast. The catalysed reaction is (13S)-hydroperoxy-(9Z,11E,15Z)-octadecatrienoate = (9Z,13S,15Z)-12,13-epoxyoctadeca-9,11,15-trienoate + H2O. It carries out the reaction (13S)-hydroperoxy-(9Z,11E)-octadecadienoate = (9Z,13S)-12,13-epoxyoctadeca-9,11-dienoate + H2O. The protein operates within lipid metabolism; oxylipin biosynthesis. Functionally, cytochrome P450 enzyme involved in the biosynthesis of oxylipin jasmonates, important phytohormones acting as growth regulators and signaling molecules for plant defense. Functions as an allene oxide synthase that converts hydroperoxy fatty acids to unstable allene epoxides. Catalyzes the dehydration of 13-HPOTE ((13S)-hydroperoxy-(9Z,11E,15Z)-octadecatrienoate), as well as 13-HPODE ((13S)-hydroperoxy-(9Z,11E)-octadecadienoate). The polypeptide is Allene oxide synthase, chloroplastic (CYP74A) (Linum usitatissimum (Flax)).